Here is a 199-residue protein sequence, read N- to C-terminus: Inner membrane-spanning protein YciB (199 aa).

Transmembrane regions (helical) follow at residues 7–27 (HPLF…AANA), 32–52 (FVAT…SYVV), 56–76 (IPLM…LTLV), 93–113 (LFAG…AIMF), 126–146 (VLTL…ELIW), and 153–173 (FWVN…AMMQ).

This sequence belongs to the YciB family.

It is found in the cell inner membrane. Plays a role in cell envelope biogenesis, maintenance of cell envelope integrity and membrane homeostasis. The protein is Inner membrane-spanning protein YciB of Nitrobacter hamburgensis (strain DSM 10229 / NCIMB 13809 / X14).